The following is a 594-amino-acid chain: MFALSKVLRRSQSLRLGACNAVYSKLDIPLGERNIAIESNALIHDKHEALPRFYELSWSSSTGRRSLSSDAGAKTTGDDDDLEDKNVDLATPDETSSDSEDGEEFSGDEGDIEGAELELHVPESKRPSEMFKAIVSVSGLSVGSALDKWVEQGKDTNRKEFESAMLQLRKRRMFGRALQMTEWLDENKQFEMEERDYACRLDLISKVRGWYKGEAYIKTIPESFRGELVYRTLLANHVATSNVRTAEAVFNKMKDLGFPLSTFTCNQMLILYKRVDKKKIADVLLLLEKENLKPNLNTYKILIDTKGSSNDITGMEQIVETMKSEGVELDLRARALIARHYASAGLKEKAEKVLKEMEGESLEENRHMCKDLLSVYGYLQREDEVRRVWKICEENPRYNEVLAAILAFGKIDKVKDAEAVFEKVLKMSHRVSSNVYSVLLRVYVDHKMVSEGKDLVKQMSDSGCNIGALTWDAVIKLYVEAGEVEKAESSLSKAIQSKQIKPLMSSFMYLMHEYVRRGDVHNTEKIFQRMKQAGYQSRFWAYQTLIQAYVNAKAPAYGMKERMKADNIFPNKRLAAQLAKADPFKKTPLSDLLD.

The N-terminal 67 residues, 1 to 67 (MFALSKVLRR…WSSSTGRRSL (67 aa)), are a transit peptide targeting the mitochondrion. Low complexity predominate over residues 62 to 75 (TGRRSLSSDAGAKT). The segment at 62-109 (TGRRSLSSDAGAKTTGDDDDLEDKNVDLATPDETSSDSEDGEEFSGDE) is disordered. Positions 95–109 (TSSDSEDGEEFSGDE) are enriched in acidic residues. 7 PPR repeats span residues 226–260 (GELVYRTLLANHVATSNVRTAEAVFNKMKDLGFPL), 261–294 (STFTCNQMLILYKRVDKKKIADVLLLLEKENLKP), 295–329 (NLNTYKILIDTKGSSNDITGMEQIVETMKSEGVEL), 330–364 (DLRARALIARHYASAGLKEKAEKVLKEMEGESLEE), 432–466 (SSNVYSVLLRVYVDHKMVSEGKDLVKQMSDSGCNI), 467–502 (GALTWDAVIKLYVEAGEVEKAESSLSKAIQSKQIKP), and 503–537 (LMSSFMYLMHEYVRRGDVHNTEKIFQRMKQAGYQS).

The protein belongs to the PPR family. P subfamily.

It is found in the mitochondrion. This is Pentatricopeptide repeat-containing protein At1g15480, mitochondrial from Arabidopsis thaliana (Mouse-ear cress).